The following is a 462-amino-acid chain: Metal cation symporter ZIP14 (462 aa).

The signal sequence occupies residues M1–A16. Over G17 to G138 the chain is Extracellular. N-linked (GlcNAc...) asparagine glycans are attached at residues N42, N68, N83, and N119. The chain crosses the membrane as a helical span at residues F139–M159. Topologically, residues K160–L167 are cytoplasmic. A helical membrane pass occupies residues L168 to I188. Topologically, residues P189–Y201 are extracellular. Residues V202–L222 form a helical membrane-spanning segment. At K223–G322 the chain is on the cytoplasmic side. An HHHGHXHX-motif motif is present at residues H230–Y237. The segment at S235–L285 is disordered. Basic and acidic residues-rich tracts occupy residues T241–T251 and S269–A279. The helical transmembrane segment at L323–I343 threads the bilayer. Over L344–Q367 the chain is Extracellular. Residues E346–E351 carry the XEXPHE-motif motif. Residues A368–L388 traverse the membrane as a helical segment. The Cytoplasmic portion of the chain corresponds to A389–N396. A helical transmembrane segment spans residues W397–E417. Residues M418–A431 lie on the Extracellular side of the membrane. A helical membrane pass occupies residues F432 to L452. Over T453–G462 the chain is Cytoplasmic.

Belongs to the ZIP transporter (TC 2.A.5) family. As to quaternary structure, homotrimer.

The protein resides in the cell membrane. Its subcellular location is the apical cell membrane. The protein localises to the basolateral cell membrane. It localises to the early endosome membrane. It is found in the late endosome membrane. The protein resides in the lysosome membrane. The catalysed reaction is Zn(2+)(out) + 2 hydrogencarbonate(out) = Zn(2+)(in) + 2 hydrogencarbonate(in). It catalyses the reaction Mn(2+)(out) + 2 hydrogencarbonate(out) = Mn(2+)(in) + 2 hydrogencarbonate(in). The enzyme catalyses Fe(2+)(out) + 2 hydrogencarbonate(out) = Fe(2+)(in) + 2 hydrogencarbonate(in). It carries out the reaction Cd(2+)(out) + 2 hydrogencarbonate(out) = Cd(2+)(in) + 2 hydrogencarbonate(in). Its function is as follows. Electroneutral transporter of the plasma membrane mediating the cellular uptake of the divalent metal cations zinc, manganese and iron that are important for tissue homeostasis, metabolism, development and immunity. Functions as an energy-dependent symporter, transporting through the membranes an electroneutral complex composed of a divalent metal cation and two bicarbonate anions. Beside these endogenous cellular substrates, can also import cadmium a non-essential metal which is cytotoxic and carcinogenic. The polypeptide is Metal cation symporter ZIP14 (Xenopus tropicalis (Western clawed frog)).